The primary structure comprises 637 residues: Glutamate--cysteine ligase catalytic subunit (637 aa).

Met-1 is modified (N-acetylmethionine). Ser-5 and Ser-8 each carry phosphoserine.

The protein belongs to the glutamate--cysteine ligase type 3 family. In terms of assembly, heterodimer of a catalytic heavy chain and a regulatory light chain.

It catalyses the reaction L-cysteine + L-glutamate + ATP = gamma-L-glutamyl-L-cysteine + ADP + phosphate + H(+). The catalysed reaction is (2S)-2-aminobutanoate + L-glutamate + ATP = gamma-L-glutamyl-(2S)-2-aminobutanoate + ADP + phosphate + H(+). It participates in sulfur metabolism; glutathione biosynthesis; glutathione from L-cysteine and L-glutamate: step 1/2. With respect to regulation, feedback inhibition by glutathione. Catalyzes the ATP-dependent ligation of L-glutamate and L-cysteine and participates in the first and rate-limiting step in glutathione biosynthesis. The protein is Glutamate--cysteine ligase catalytic subunit of Homo sapiens (Human).